The primary structure comprises 181 residues: Large ribosomal subunit protein uL5 (181 aa).

The protein belongs to the universal ribosomal protein uL5 family. As to quaternary structure, part of the 50S ribosomal subunit; part of the 5S rRNA/L5/L18/L25 subcomplex. Contacts the 5S rRNA and the P site tRNA. Forms a bridge to the 30S subunit in the 70S ribosome.

Its function is as follows. This is one of the proteins that bind and probably mediate the attachment of the 5S RNA into the large ribosomal subunit, where it forms part of the central protuberance. In the 70S ribosome it contacts protein S13 of the 30S subunit (bridge B1b), connecting the 2 subunits; this bridge is implicated in subunit movement. Contacts the P site tRNA; the 5S rRNA and some of its associated proteins might help stabilize positioning of ribosome-bound tRNAs. This is Large ribosomal subunit protein uL5 from Campylobacter lari (strain RM2100 / D67 / ATCC BAA-1060).